The following is an 83-amino-acid chain: ATP synthase subunit c 2 (83 aa).

Transmembrane regions (helical) follow at residues 8–28 (IASILGAAFAVGIGSLGPALG) and 58–78 (LAMIETMAIYCLVIALLLLFA).

It belongs to the ATPase C chain family. As to quaternary structure, F-type ATPases have 2 components, F(1) - the catalytic core - and F(0) - the membrane proton channel. F(1) has five subunits: alpha(3), beta(3), gamma(1), delta(1), epsilon(1). F(0) has four main subunits: a(1), b(1), b'(1) and c(10-14). The alpha and beta chains form an alternating ring which encloses part of the gamma chain. F(1) is attached to F(0) by a central stalk formed by the gamma and epsilon chains, while a peripheral stalk is formed by the delta, b and b' chains.

The protein localises to the cell inner membrane. Functionally, f(1)F(0) ATP synthase produces ATP from ADP in the presence of a proton or sodium gradient. F-type ATPases consist of two structural domains, F(1) containing the extramembraneous catalytic core and F(0) containing the membrane proton channel, linked together by a central stalk and a peripheral stalk. During catalysis, ATP synthesis in the catalytic domain of F(1) is coupled via a rotary mechanism of the central stalk subunits to proton translocation. Key component of the F(0) channel; it plays a direct role in translocation across the membrane. A homomeric c-ring of between 10-14 subunits forms the central stalk rotor element with the F(1) delta and epsilon subunits. This is ATP synthase subunit c 2 from Cereibacter sphaeroides (strain ATCC 17029 / ATH 2.4.9) (Rhodobacter sphaeroides).